The following is a 156-amino-acid chain: Small ribosomal subunit protein uS7 (156 aa).

The protein belongs to the universal ribosomal protein uS7 family. As to quaternary structure, part of the 30S ribosomal subunit. Contacts proteins S9 and S11.

In terms of biological role, one of the primary rRNA binding proteins, it binds directly to 16S rRNA where it nucleates assembly of the head domain of the 30S subunit. Is located at the subunit interface close to the decoding center, probably blocks exit of the E-site tRNA. The polypeptide is Small ribosomal subunit protein uS7 (Prochlorococcus marinus (strain MIT 9211)).